Reading from the N-terminus, the 208-residue chain is Negative modulator of initiation of replication (208 aa).

The interaction with DNA stretch occupies residues 115 to 116 (AV).

It belongs to the SeqA family. In terms of assembly, homodimer. Polymerizes to form helical filaments.

The protein resides in the cytoplasm. Functionally, negative regulator of replication initiation, which contributes to regulation of DNA replication and ensures that replication initiation occurs exactly once per chromosome per cell cycle. Binds to pairs of hemimethylated GATC sequences in the oriC region, thus preventing assembly of replication proteins and re-initiation at newly replicated origins. Repression is relieved when the region becomes fully methylated. This chain is Negative modulator of initiation of replication, found in Shewanella frigidimarina (strain NCIMB 400).